Reading from the N-terminus, the 122-residue chain is Large ribosomal subunit protein uL18 (122 aa).

Residues 1-20 (MLKKVSKNTNRQGRHQRVRN) are compositionally biased toward basic residues. A disordered region spans residues 1–22 (MLKKVSKNTNRQGRHQRVRNKI).

This sequence belongs to the universal ribosomal protein uL18 family. As to quaternary structure, part of the 50S ribosomal subunit; part of the 5S rRNA/L5/L18/L25 subcomplex. Contacts the 5S and 23S rRNAs.

Functionally, this is one of the proteins that bind and probably mediate the attachment of the 5S RNA into the large ribosomal subunit, where it forms part of the central protuberance. This Alkaliphilus metalliredigens (strain QYMF) protein is Large ribosomal subunit protein uL18.